Here is a 643-residue protein sequence, read N- to C-terminus: Protein tramtrack, beta isoform (643 aa).

The BTB domain maps to 33–98 (TDVTLAVEGQ…MYRGEVSVDQ (66 aa)). Disordered regions lie at residues 118–148 (EVND…PQLQ) and 171–300 (ANAG…GLDT). A Glycyl lysine isopeptide (Lys-Gly) (interchain with G-Cter in ubiquitin) cross-link involves residue lysine 123. Low complexity predominate over residues 125–145 (SPAAAAAGAGATGSESTATTP). A compositionally biased stretch (polar residues) spans 176–187 (TPTLPVQPSLLS). The segment covering 192–201 (PKRKRGRPRK) has biased composition (basic residues). Lysine 201 participates in a covalent cross-link: Glycyl lysine isopeptide (Lys-Gly) (interchain with G-Cter in ubiquitin). Residues 254–285 (HTDDLNESRDSLPSKRSKNSKDHRVVSHHEDN) are compositionally biased toward basic and acidic residues. Residues lysine 355, lysine 397, lysine 418, lysine 457, lysine 478, and lysine 480 each participate in a glycyl lysine isopeptide (Lys-Gly) (interchain with G-Cter in ubiquitin) cross-link. C2H2-type zinc fingers lie at residues 508 to 531 (YRCK…VTSH) and 538 to 561 (YPCP…KIIH). Lysine 545 is covalently cross-linked (Glycyl lysine isopeptide (Lys-Gly) (interchain with G-Cter in ubiquitin)). The interval 584 to 643 (GVSGASTPPPPDLSGQNSNQSLPATSNALSTSSSSSTSSSSGSLGPLTTSAPPAPAAAAQ) is disordered. Positions 604–643 (SLPATSNALSTSSSSSTSSSSGSLGPLTTSAPPAPAAAAQ) are enriched in low complexity.

Can form homodimers. Interacts with Trl in vivo via the BTB domain. Interacts with phyl. Interacts with Usp47. Post-translationally, polyubiquitinated by sina. Polyubiquitin linkage is mainly through 'Lys-48', but linkage through 'Lys-63' also occurs. Deubiquitination by Usp47 leads to its stabilization.

It localises to the nucleus. Its function is as follows. Binds to a number of sites in the transcriptional regulatory region of ftz. Isoform beta is required to repress inappropriate segmentation gene transcription and repress genes incompatible with development of photoreceptor cell fates. Probable repressor of the transcription of the segmentation genes ftz, eve, h, odd, run, and en. Inhibits Trl-dependent activation of eve. May bind to the region AGGGC/TGG. Degradation of ttk is directed by binding of sinah or sina, via the adapter molecule phyl which binds to the BTB domain of ttk. A second method of degradation exists that is phyl-independent, this is mediated by recognition of motifs in the C-terminus of ttk. The polypeptide is Protein tramtrack, beta isoform (ttk) (Drosophila melanogaster (Fruit fly)).